An 827-amino-acid polypeptide reads, in one-letter code: Valine--tRNA ligase (827 aa).

The short motif at 41-51 (PNVTGQLHLGH) is the 'HIGH' region element. A 'KMSKS' region motif is present at residues 511 to 515 (KMTKS). K514 contacts ATP. Residues 765-827 (ENLSKEKAQK…KELLDEKIIE (63 aa)) are a coiled coil.

This sequence belongs to the class-I aminoacyl-tRNA synthetase family. ValS type 1 subfamily. Monomer.

The protein resides in the cytoplasm. The enzyme catalyses tRNA(Val) + L-valine + ATP = L-valyl-tRNA(Val) + AMP + diphosphate. In terms of biological role, catalyzes the attachment of valine to tRNA(Val). As ValRS can inadvertently accommodate and process structurally similar amino acids such as threonine, to avoid such errors, it has a 'posttransfer' editing activity that hydrolyzes mischarged Thr-tRNA(Val) in a tRNA-dependent manner. The sequence is that of Valine--tRNA ligase from Mycoplasmopsis pulmonis (strain UAB CTIP) (Mycoplasma pulmonis).